A 380-amino-acid polypeptide reads, in one-letter code: Cytochrome b (380 aa).

Transmembrane regions (helical) follow at residues 33-53 (FGSL…FLAM), 77-98 (WLIR…YLHI), 113-133 (WNVG…GYVL), and 178-198 (FFAF…IHLL). Positions 83 and 97 each coordinate heme b. Residues His-182 and His-196 each coordinate heme b. His-201 provides a ligand contact to a ubiquinone. Helical transmembrane passes span 226 to 246 (YKDL…ALFS), 288 to 308 (LGGV…PILH), 320 to 340 (ITQF…WIGG), and 347 to 367 (FIII…VLTP).

This sequence belongs to the cytochrome b family. In terms of assembly, the cytochrome bc1 complex contains 3 respiratory subunits (MT-CYB, CYC1 and UQCRFS1), 2 core proteins (UQCRC1 and UQCRC2) and probably 6 low-molecular weight proteins. The cofactor is heme b.

It is found in the mitochondrion inner membrane. Functionally, component of the ubiquinol-cytochrome c reductase complex (complex III or cytochrome b-c1 complex) that is part of the mitochondrial respiratory chain. The b-c1 complex mediates electron transfer from ubiquinol to cytochrome c. Contributes to the generation of a proton gradient across the mitochondrial membrane that is then used for ATP synthesis. The protein is Cytochrome b (mt-cyb) of Dactyloptena peterseni (Starry flying gurnard).